The sequence spans 1378 residues: Disease resistance protein RRS1 (1378 aa).

The region spanning Glu5–His146 is the TIR domain. Positions Ile170–His421 constitute an NB-ARC domain. Gly179–Thr186 lines the ATP pocket. LRR repeat units lie at residues Ser498–Asn522, Asn535–Pro553, Asn554–Pro575, His577–Leu598, Ala621–Arg646, Pro665–Pro688, Leu742–Gly766, Pro768–Ile793, and Pro831–Leu854. The short motif at Arg988 to Asp1005 is the Nuclear localization signal element. Residues Ile1204 to Pro1272 constitute a DNA-binding region (WRKY). Positions Arg1300–Arg1321 are disordered.

Interacts with PopP2, a R.solanacearum type III effector.

The protein resides in the nucleus. The protein localises to the cytoplasm. In terms of biological role, transcription factor. Interacts specifically with the W box (5'-(T)TGAC[CT]-3'), a frequently occurring elicitor-responsive cis-acting element. Also acts as a disease resistance protein involved in resistance to fungal and bacterial pathogens, including R.solanacearum, P.syringae pv. tomato and C.higginsianum. RRS1 mediated resistance depends on salicylic acid and NDR1 (AC O48915). The protein is Disease resistance protein RRS1 of Arabidopsis thaliana (Mouse-ear cress).